A 387-amino-acid polypeptide reads, in one-letter code: Queuine tRNA-ribosyltransferase (387 aa).

The Proton acceptor role is filled by Asp105. Substrate contacts are provided by residues 105–109 (DSGGF), Asp177, and Gly248. Residues 278–284 (GIGDLPS) are RNA binding. The Nucleophile role is filled by Asp297. The RNA binding; important for wobble base 34 recognition stretch occupies residues 302–306 (TRAAR). 4 residues coordinate Zn(2+): Cys335, Cys337, Cys340, and His366.

Belongs to the queuine tRNA-ribosyltransferase family. As to quaternary structure, homodimer. Within each dimer, one monomer is responsible for RNA recognition and catalysis, while the other monomer binds to the replacement base PreQ1. Zn(2+) serves as cofactor.

It catalyses the reaction 7-aminomethyl-7-carbaguanine + guanosine(34) in tRNA = 7-aminomethyl-7-carbaguanosine(34) in tRNA + guanine. It participates in tRNA modification; tRNA-queuosine biosynthesis. Functionally, catalyzes the base-exchange of a guanine (G) residue with the queuine precursor 7-aminomethyl-7-deazaguanine (PreQ1) at position 34 (anticodon wobble position) in tRNAs with GU(N) anticodons (tRNA-Asp, -Asn, -His and -Tyr). Catalysis occurs through a double-displacement mechanism. The nucleophile active site attacks the C1' of nucleotide 34 to detach the guanine base from the RNA, forming a covalent enzyme-RNA intermediate. The proton acceptor active site deprotonates the incoming PreQ1, allowing a nucleophilic attack on the C1' of the ribose to form the product. After dissociation, two additional enzymatic reactions on the tRNA convert PreQ1 to queuine (Q), resulting in the hypermodified nucleoside queuosine (7-(((4,5-cis-dihydroxy-2-cyclopenten-1-yl)amino)methyl)-7-deazaguanosine). In Protochlamydia amoebophila (strain UWE25), this protein is Queuine tRNA-ribosyltransferase.